We begin with the raw amino-acid sequence, 129 residues long: NADPH-dependent 7-cyano-7-deazaguanine reductase (129 aa).

C34 (thioimide intermediate) is an active-site residue. D41 acts as the Proton donor in catalysis. Substrate contacts are provided by residues 56–58 and 75–76; these read VEL and HE.

It belongs to the GTP cyclohydrolase I family. QueF type 1 subfamily.

It is found in the cytoplasm. The enzyme catalyses 7-aminomethyl-7-carbaguanine + 2 NADP(+) = 7-cyano-7-deazaguanine + 2 NADPH + 3 H(+). It functions in the pathway tRNA modification; tRNA-queuosine biosynthesis. Functionally, catalyzes the NADPH-dependent reduction of 7-cyano-7-deazaguanine (preQ0) to 7-aminomethyl-7-deazaguanine (preQ1). The sequence is that of NADPH-dependent 7-cyano-7-deazaguanine reductase from Alkalilimnicola ehrlichii (strain ATCC BAA-1101 / DSM 17681 / MLHE-1).